The primary structure comprises 122 residues: Small ribosomal subunit protein uS13 (122 aa).

The segment at 95-122 is disordered; it reads GLPVRGQRTKTNSRTRKGRRKTVANKKK. The span at 101 to 122 shows a compositional bias: basic residues; that stretch reads QRTKTNSRTRKGRRKTVANKKK.

It belongs to the universal ribosomal protein uS13 family. As to quaternary structure, part of the 30S ribosomal subunit. Forms a loose heterodimer with protein S19. Forms two bridges to the 50S subunit in the 70S ribosome.

Located at the top of the head of the 30S subunit, it contacts several helices of the 16S rRNA. In the 70S ribosome it contacts the 23S rRNA (bridge B1a) and protein L5 of the 50S subunit (bridge B1b), connecting the 2 subunits; these bridges are implicated in subunit movement. Contacts the tRNAs in the A and P-sites. The protein is Small ribosomal subunit protein uS13 of Protochlamydia amoebophila (strain UWE25).